Here is a 170-residue protein sequence, read N- to C-terminus: Translationally-controlled tumor protein homolog (170 aa).

Positions 1–170 (MIIYKCIISG…FKDGLLAEKC (170 aa)) constitute a TCTP domain.

The protein belongs to the TCTP family.

The protein resides in the cytoplasm. In terms of biological role, involved in calcium binding and microtubule stabilization. The polypeptide is Translationally-controlled tumor protein homolog (tpt1) (Lateolabrax japonicus (Japanese sea perch)).